A 173-amino-acid chain; its full sequence is 2-C-methyl-D-erythritol 2,4-cyclodiphosphate synthase (173 aa).

The a divalent metal cation site is built by aspartate 17 and histidine 19. 4-CDP-2-C-methyl-D-erythritol 2-phosphate contacts are provided by residues 17 to 19 and 49 to 50; these read DVH and HS. A divalent metal cation is bound at residue histidine 57. Residues 76 to 80, 147 to 150, and arginine 157 each bind 4-CDP-2-C-methyl-D-erythritol 2-phosphate; these read FPNTD and TTTE.

The protein belongs to the IspF family. Homotrimer. Requires a divalent metal cation as cofactor.

The catalysed reaction is 4-CDP-2-C-methyl-D-erythritol 2-phosphate = 2-C-methyl-D-erythritol 2,4-cyclic diphosphate + CMP. It participates in isoprenoid biosynthesis; isopentenyl diphosphate biosynthesis via DXP pathway; isopentenyl diphosphate from 1-deoxy-D-xylulose 5-phosphate: step 4/6. Functionally, involved in the biosynthesis of isopentenyl diphosphate (IPP) and dimethylallyl diphosphate (DMAPP), two major building blocks of isoprenoid compounds. Catalyzes the conversion of 4-diphosphocytidyl-2-C-methyl-D-erythritol 2-phosphate (CDP-ME2P) to 2-C-methyl-D-erythritol 2,4-cyclodiphosphate (ME-CPP) with a corresponding release of cytidine 5-monophosphate (CMP). The sequence is that of 2-C-methyl-D-erythritol 2,4-cyclodiphosphate synthase from Ehrlichia ruminantium (strain Welgevonden).